We begin with the raw amino-acid sequence, 254 residues long: Ditrans,polycis-undecaprenyl-diphosphate synthase ((2E,6E)-farnesyl-diphosphate specific) (254 aa).

The active site involves D25. A Mg(2+)-binding site is contributed by D25. Residues 26–29, W30, R38, H42, and 70–72 contribute to the substrate site; these read GNGR and SSE. N73 functions as the Proton acceptor in the catalytic mechanism. Residues W74, R76, and R193 each coordinate substrate. H198 contributes to the Mg(2+) binding site. Position 199 to 201 (199 to 201) interacts with substrate; the sequence is RIS. Mg(2+) is bound at residue E212.

This sequence belongs to the UPP synthase family. As to quaternary structure, homodimer. It depends on Mg(2+) as a cofactor.

It carries out the reaction 8 isopentenyl diphosphate + (2E,6E)-farnesyl diphosphate = di-trans,octa-cis-undecaprenyl diphosphate + 8 diphosphate. In terms of biological role, catalyzes the sequential condensation of isopentenyl diphosphate (IPP) with (2E,6E)-farnesyl diphosphate (E,E-FPP) to yield (2Z,6Z,10Z,14Z,18Z,22Z,26Z,30Z,34E,38E)-undecaprenyl diphosphate (di-trans,octa-cis-UPP). UPP is the precursor of glycosyl carrier lipid in the biosynthesis of bacterial cell wall polysaccharide components such as peptidoglycan and lipopolysaccharide. The chain is Ditrans,polycis-undecaprenyl-diphosphate synthase ((2E,6E)-farnesyl-diphosphate specific) from Photorhabdus laumondii subsp. laumondii (strain DSM 15139 / CIP 105565 / TT01) (Photorhabdus luminescens subsp. laumondii).